A 135-amino-acid chain; its full sequence is RxLR effector protein Avr10 (135 aa).

Positions Met1 to Ala19 are cleaved as a signal peptide. Positions Gly34–Lys43 are enriched in polar residues. Residues Gly34 to Ala64 form a disordered region. The RxLR-dEER signature appears at Arg44–Arg63. Residues Leu46–Ala55 show a composition bias toward basic and acidic residues.

It belongs to the RxLR effector family.

The protein resides in the secreted. The protein localises to the host nucleus. Its subcellular location is the host cytoplasm. Its function is as follows. Secreted effector that acts as an elicitor of hypersensitive response (HR) specifically on plants carrying defense protein R10. Enhances P.infestans colonization of Nicotiana benthamiana leaves. This chain is RxLR effector protein Avr10, found in Phytophthora infestans (strain T30-4) (Potato late blight agent).